A 128-amino-acid chain; its full sequence is Histone H2A type 1-J (128 aa).

The disordered stretch occupies residues 1 to 22 (MSGRGKQGGKARAKAKTRSSRA). Ser2 carries the post-translational modification N-acetylserine. Position 2 is a phosphoserine; by RPS6KA5 (Ser2). Arg4 is subject to Citrulline; alternate. At Arg4 the chain carries Symmetric dimethylarginine; by PRMT5; alternate. Residue Lys6 is modified to N6-(2-hydroxyisobutyryl)lysine. Residues 7–19 (QGGKARAKAKTRS) show a composition bias toward basic residues. Lys10 carries the post-translational modification N6-(2-hydroxyisobutyryl)lysine; alternate. Residues Lys10 and Lys14 each carry the N6-(beta-hydroxybutyryl)lysine; alternate modification. Position 10 is an N6-lactoyllysine; alternate (Lys10). Lys10 is subject to N6-succinyllysine; alternate. A Glycyl lysine isopeptide (Lys-Gly) (interchain with G-Cter in ubiquitin); alternate cross-link involves residue Lys14. A Glycyl lysine isopeptide (Lys-Gly) (interchain with G-Cter in ubiquitin) cross-link involves residue Lys16. Position 37 is an N6-(2-hydroxyisobutyryl)lysine; alternate (Lys37). An N6-(beta-hydroxybutyryl)lysine; alternate modification is found at Lys37. Position 37 is an N6-crotonyllysine; alternate (Lys37). N6-(2-hydroxyisobutyryl)lysine is present on residues Lys75 and Lys76. Lys96 carries the post-translational modification N6-(2-hydroxyisobutyryl)lysine; alternate. Lys96 bears the N6-(beta-hydroxybutyryl)lysine; alternate mark. Lys96 is subject to N6-succinyllysine; alternate. Lys96 carries the N6-glutaryllysine; alternate modification. Lys100 is subject to N6-glutaryllysine. Gln105 carries the post-translational modification N5-methylglutamine. Lys119 is subject to N6-(2-hydroxyisobutyryl)lysine; alternate. Lys119 carries the post-translational modification N6-(beta-hydroxybutyryl)lysine; alternate. N6-crotonyllysine; alternate is present on residues Lys119 and Lys120. An N6-glutaryllysine; alternate mark is found at Lys119 and Lys120. Lys120 participates in a covalent cross-link: Glycyl lysine isopeptide (Lys-Gly) (interchain with G-Cter in ubiquitin); alternate. Thr121 is modified (phosphothreonine; by DCAF1). Lys126 is modified (N6-crotonyllysine; alternate). Lys126 is subject to N6-glutaryllysine; alternate.

It belongs to the histone H2A family. As to quaternary structure, the nucleosome is a histone octamer containing two molecules each of H2A, H2B, H3 and H4 assembled in one H3-H4 heterotetramer and two H2A-H2B heterodimers. The octamer wraps approximately 147 bp of DNA. Post-translationally, deiminated on Arg-4 in granulocytes upon calcium entry. Monoubiquitination of Lys-120 (H2AK119Ub) by RING1, TRIM37 and RNF2/RING2 complex gives a specific tag for epigenetic transcriptional repression and participates in X chromosome inactivation of female mammals. It is involved in the initiation of both imprinted and random X inactivation. Ubiquitinated H2A is enriched in inactive X chromosome chromatin. Ubiquitination of H2A functions downstream of methylation of 'Lys-27' of histone H3 (H3K27me). H2AK119Ub by RNF2/RING2 can also be induced by ultraviolet and may be involved in DNA repair. Monoubiquitination of Lys-120 (H2AK119Ub) by TRIM37 may promote transformation of cells in a number of breast cancers. Following DNA double-strand breaks (DSBs), it is ubiquitinated through 'Lys-63' linkage of ubiquitin moieties by the E2 ligase UBE2N and the E3 ligases RNF8 and RNF168, leading to the recruitment of repair proteins to sites of DNA damage. Ubiquitination at Lys-14 and Lys-16 (H2AK13Ub and H2AK15Ub, respectively) in response to DNA damage is initiated by RNF168 that mediates monoubiquitination at these 2 sites, and 'Lys-63'-linked ubiquitin are then conjugated to monoubiquitin; RNF8 is able to extend 'Lys-63'-linked ubiquitin chains in vitro. Deubiquitinated by USP51 at Lys-14 and Lys-16 (H2AK13Ub and H2AK15Ub, respectively) after damaged DNA is repaired. H2AK119Ub and ionizing radiation-induced 'Lys-63'-linked ubiquitination (H2AK13Ub and H2AK15Ub) are distinct events. In terms of processing, phosphorylation on Ser-2 (H2AS1ph) is enhanced during mitosis. Phosphorylation on Ser-2 by RPS6KA5/MSK1 directly represses transcription. Acetylation of H3 inhibits Ser-2 phosphorylation by RPS6KA5/MSK1. Phosphorylation at Thr-121 (H2AT120ph) by DCAF1 is present in the regulatory region of many tumor suppresor genes and down-regulates their transcription. Post-translationally, glutamine methylation at Gln-105 (H2AQ104me) by FBL is specifically dedicated to polymerase I. It is present at 35S ribosomal DNA locus and impairs binding of the FACT complex. Symmetric dimethylation on Arg-4 by the PRDM1/PRMT5 complex may play a crucial role in the germ-cell lineage. In terms of processing, crotonylation (Kcr) is specifically present in male germ cells and marks testis-specific genes in post-meiotic cells, including X-linked genes that escape sex chromosome inactivation in haploid cells. Crotonylation marks active promoters and enhancers and confers resistance to transcriptional repressors. It is also associated with post-meiotically activated genes on autosomes. Post-translationally, lactylated in macrophages by EP300/P300 by using lactoyl-CoA directly derived from endogenous or exogenous lactate, leading to stimulates gene transcription.

The protein resides in the nucleus. The protein localises to the chromosome. Functionally, core component of nucleosome. Nucleosomes wrap and compact DNA into chromatin, limiting DNA accessibility to the cellular machineries which require DNA as a template. Histones thereby play a central role in transcription regulation, DNA repair, DNA replication and chromosomal stability. DNA accessibility is regulated via a complex set of post-translational modifications of histones, also called histone code, and nucleosome remodeling. This is Histone H2A type 1-J from Homo sapiens (Human).